Here is a 261-residue protein sequence, read N- to C-terminus: 4-hydroxy-tetrahydrodipicolinate reductase (261 aa).

Residues 11–16 (GFMGAM), 96–98 (GTT), and 122–125 (APNF) contribute to the NAD(+) site. Histidine 152 acts as the Proton donor/acceptor in catalysis. Histidine 153 serves as a coordination point for (S)-2,3,4,5-tetrahydrodipicolinate. The Proton donor role is filled by lysine 156. 162–163 (GT) provides a ligand contact to (S)-2,3,4,5-tetrahydrodipicolinate.

This sequence belongs to the DapB family.

It is found in the cytoplasm. It catalyses the reaction (S)-2,3,4,5-tetrahydrodipicolinate + NAD(+) + H2O = (2S,4S)-4-hydroxy-2,3,4,5-tetrahydrodipicolinate + NADH + H(+). The enzyme catalyses (S)-2,3,4,5-tetrahydrodipicolinate + NADP(+) + H2O = (2S,4S)-4-hydroxy-2,3,4,5-tetrahydrodipicolinate + NADPH + H(+). The protein operates within amino-acid biosynthesis; L-lysine biosynthesis via DAP pathway; (S)-tetrahydrodipicolinate from L-aspartate: step 4/4. In terms of biological role, catalyzes the conversion of 4-hydroxy-tetrahydrodipicolinate (HTPA) to tetrahydrodipicolinate. The protein is 4-hydroxy-tetrahydrodipicolinate reductase of Lactobacillus helveticus (strain DPC 4571).